The following is a 304-amino-acid chain: Small ribosomal subunit biogenesis GTPase RsgA (304 aa).

The region spanning H78–P237 is the CP-type G domain. GTP is bound by residues T127–D130 and G179–S187. C262, C267, H269, and C275 together coordinate Zn(2+).

It belongs to the TRAFAC class YlqF/YawG GTPase family. RsgA subfamily. Monomer. Associates with 30S ribosomal subunit, binds 16S rRNA. The cofactor is Zn(2+).

The protein resides in the cytoplasm. Functionally, one of several proteins that assist in the late maturation steps of the functional core of the 30S ribosomal subunit. Helps release RbfA from mature subunits. May play a role in the assembly of ribosomal proteins into the subunit. Circularly permuted GTPase that catalyzes slow GTP hydrolysis, GTPase activity is stimulated by the 30S ribosomal subunit. The sequence is that of Small ribosomal subunit biogenesis GTPase RsgA from Synechococcus sp. (strain CC9605).